The chain runs to 170 residues: Methanogen homoaconitase small subunit (170 aa).

Residues 26-29 carry the YLRT motif; it reads YLRT.

It belongs to the LeuD family. LeuD type 2 subfamily. Heterotetramer of 2 HacA and 2 HacB proteins.

It catalyses the reaction (2R)-homocitrate = (2R,3S)-homoisocitrate. The enzyme catalyses (2R)-homocitrate = cis-homoaconitate + H2O. The catalysed reaction is (2R,3S)-homoisocitrate = cis-homoaconitate + H2O. It carries out the reaction cis-(homo)2aconitate + H2O = (2R,3S)-iso(homo)2citrate. It catalyses the reaction cis-(homo)3aconitate + H2O = (2R,3S)-iso(homo)3citrate. Its pathway is organic acid metabolism; 2-oxosuberate biosynthesis. Its function is as follows. Component of a hydro-lyase with broad substrate specificity for cis-unsaturated tricarboxylic acids. Catalyzes both the reversible dehydration of (R)-homocitrate ((R)-2-hydroxybutane-1,2,4-tricarboxylate) to produce cis-homoaconitate ((Z)-but-1-ene-1,2,4-tricarboxylate), and its hydration to homoisocitrate ((1R,2S)-1-hydroxybutane-1,2,4-tricarboxylate). Is also able to hydrate the analogous longer chain substrates cis-homo(2)-aconitate, cis-homo(3)-aconitate. These reactions are part of the biosynthesis pathway of coenzyme B. This chain is Methanogen homoaconitase small subunit (hacB), found in Methanothermobacter thermautotrophicus (strain ATCC 29096 / DSM 1053 / JCM 10044 / NBRC 100330 / Delta H) (Methanobacterium thermoautotrophicum).